The primary structure comprises 124 residues: Small polypeptide ROTUNDIFOLIA LIKE 3 (124 aa).

A disordered region spans residues 1 to 25 (MEDERWKLSSSKGRSKSGRSCSSSS). Asn35 and Asn38 each carry an N-linked (GlcNAc...) asparagine glycan. Residues 59–75 (AWSAAGAGGGGASSSSS) traverse the membrane as a helical segment. Positions 60–95 (WSAAGAGGGGASSSSSSQHQHQQQQQQSNNSQRLSK) are disordered. Positions 71 to 91 (SSSSSSQHQHQQQQQQSNNSQ) are enriched in low complexity. N-linked (GlcNAc...) asparagine glycosylation is present at Asn88. The required for DVL/RTFL small polypeptide activity stretch occupies residues 92–124 (RLSKKCVEAVKEHRARFYIVRRCVSMLVCWRDY).

This sequence belongs to the DVL/RTFL small polypeptides family.

It localises to the cell membrane. Functionally, small polypeptide acting as a regulatory molecule which coordinates cellular responses required for differentiation, growth and development, probably by restricting polar cell proliferation in lateral organs (e.g. leaves and petioles). This is Small polypeptide ROTUNDIFOLIA LIKE 3 from Oryza sativa subsp. indica (Rice).